The chain runs to 489 residues: MIKLFNTLSKRIEVFKPIDDVVKIYCCGVTVYDLCHLGHARSYIAWDVLRRFLIYSDFKVKYVQNFTDIDDKILKRAKEESISMKEVSEKNIIEFHKDMDSLGIMRPDSMPRATNHICNICDLITILEDKGYAYSRDGDVYYSVFKNQNYGKLSNQNIEEQNINQQGRMANEENSKKLNPQDFALWKKAKDDEPFFDSPWGKGRPGWHIECSAMVKDELGDTIDIHLGGSDLIFPHHENEIAQSEAANGKKLANYWLHNGMVNVNGQKMSKSLKNFKTIRELINSGISPMTLRYFVMTVNYRKPLDFTEEALRSASEAWKNINVALSFMDLTKGSLNSIDKNEPIEEEYKEKISFELSQKKLKFSEALGNDLNTASAIAIIYDLAKPLKNFLNQFQRVEGFKIDQNEKFFLLENFKTLEKLTEVLGLKKEVLVKESKITEEEISTLINERLKAKKEKNYAKADEIRSLLKEKGIELIDQSKEITTWIRV.

Residue Cys27 coordinates Zn(2+). Residues 29 to 39 carry the 'HIGH' region motif; sequence VTVYDLCHLGH. Zn(2+) is bound by residues Cys211, His236, and Glu240. Positions 268 to 272 match the 'KMSKS' region motif; sequence KMSKS. Residue Lys271 coordinates ATP.

This sequence belongs to the class-I aminoacyl-tRNA synthetase family. Monomer. Requires Zn(2+) as cofactor.

It localises to the cytoplasm. It catalyses the reaction tRNA(Cys) + L-cysteine + ATP = L-cysteinyl-tRNA(Cys) + AMP + diphosphate. The polypeptide is Cysteine--tRNA ligase (Prochlorococcus marinus (strain MIT 9301)).